The sequence spans 757 residues: Polyribonucleotide nucleotidyltransferase (757 aa).

Residues D482 and D488 each coordinate Mg(2+). The region spanning 549–608 is the KH domain; that stretch reads PRMLSFYIDKDKISAAIGSKGKNIRSVCERSNAKIEIGDDGKVSVFATSGTEAEIAKSMM. Residues 618–686 form the S1 motif domain; that stretch reads GSIVDVKVVR…KGGCPKLSRR (69 aa). Basic and acidic residues predominate over residues 703-714; the sequence is EERKDGPNDRDN. The interval 703–757 is disordered; the sequence is EERKDGPNDRDNYYNNSFSRKPGGSHHKRPPRPRSGFSNRNRPKFGNNDSSSGFY. Residues 725–734 are compositionally biased toward basic residues; the sequence is GGSHHKRPPR.

The protein belongs to the polyribonucleotide nucleotidyltransferase family. The cofactor is Mg(2+).

Its subcellular location is the cytoplasm. It carries out the reaction RNA(n+1) + phosphate = RNA(n) + a ribonucleoside 5'-diphosphate. Involved in mRNA degradation. Catalyzes the phosphorolysis of single-stranded polyribonucleotides processively in the 3'- to 5'-direction. The polypeptide is Polyribonucleotide nucleotidyltransferase (Wolbachia sp. subsp. Drosophila simulans (strain wRi)).